A 294-amino-acid chain; its full sequence is Beta-glucoside kinase (294 aa).

A5 to T11 is an ATP binding site.

The protein belongs to the ROK (NagC/XylR) family.

It catalyses the reaction D-cellobiose + ATP = 6-phospho-beta-D-glucosyl-(1-&gt;4)-D-glucose + ADP + H(+). Catalyzes the ATP-dependent phosphorylation of cellobiose to produce cellobiose-6'-P. May have a dual role of kinase and transcriptional regulator of the cellobiose-PTS operon. In Listeria innocua serovar 6a (strain ATCC BAA-680 / CLIP 11262), this protein is Beta-glucoside kinase (bglK).